The sequence spans 492 residues: Protein odr-4 homolog (492 aa).

Residues 251-270 are disordered; the sequence is LQPTSTTGGTATASSNTTDS. Low complexity predominate over residues 254–268; it reads TSTTGGTATASSNTT. A helical transmembrane segment spans residues 469–489; it reads MVGIAVALLVLLSSVALHFVL.

Belongs to the ODR-4 family.

The protein localises to the membrane. Its function is as follows. May play a role in the trafficking of a subset of G-protein coupled receptors. This chain is Protein odr-4 homolog, found in Drosophila melanogaster (Fruit fly).